Here is a 352-residue protein sequence, read N- to C-terminus: Photosystem II D2 protein (352 aa).

Thr-2 is subject to N-acetylthreonine. At Thr-2 the chain carries Phosphothreonine. A helical transmembrane segment spans residues 40 to 60 (CAYFAVGGWLTGTTFVTSWYT). A chlorophyll a-binding site is contributed by His-117. A helical membrane pass occupies residues 124–140 (GFMLRQFEIARAIGLRP). Pheophytin a contacts are provided by Gln-129 and Asn-142. Residues 152-165 (VFVSVFLIYPLGQS) form a helical membrane-spanning segment. His-197 provides a ligand contact to chlorophyll a. A helical transmembrane segment spans residues 207 to 227 (AALLCAIHGATVENTLFEDGD). The a plastoquinone site is built by His-214 and Phe-261. His-214 lines the Fe cation pocket. Fe cation is bound at residue His-268. Residues 278 to 294 (GLWMSAIGVVGLALNLR) form a helical membrane-spanning segment.

It belongs to the reaction center PufL/M/PsbA/D family. As to quaternary structure, PSII is composed of 1 copy each of membrane proteins PsbA, PsbB, PsbC, PsbD, PsbE, PsbF, PsbH, PsbI, PsbJ, PsbK, PsbL, PsbM, PsbT, PsbX, PsbY, PsbZ, Psb30/Ycf12, at least 3 peripheral proteins of the oxygen-evolving complex and a large number of cofactors. It forms dimeric complexes. The D1/D2 heterodimer binds P680, chlorophylls that are the primary electron donor of PSII, and subsequent electron acceptors. It shares a non-heme iron and each subunit binds pheophytin, quinone, additional chlorophylls, carotenoids and lipids. There is also a Cl(-1) ion associated with D1 and D2, which is required for oxygen evolution. The PSII complex binds additional chlorophylls, carotenoids and specific lipids. is required as a cofactor.

Its subcellular location is the plastid. It is found in the chloroplast thylakoid membrane. It carries out the reaction 2 a plastoquinone + 4 hnu + 2 H2O = 2 a plastoquinol + O2. Photosystem II (PSII) is a light-driven water:plastoquinone oxidoreductase that uses light energy to abstract electrons from H(2)O, generating O(2) and a proton gradient subsequently used for ATP formation. It consists of a core antenna complex that captures photons, and an electron transfer chain that converts photonic excitation into a charge separation. The D1/D2 (PsbA/PsbD) reaction center heterodimer binds P680, the primary electron donor of PSII as well as several subsequent electron acceptors. D2 is needed for assembly of a stable PSII complex. This is Photosystem II D2 protein from Nephroselmis olivacea (Green alga).